We begin with the raw amino-acid sequence, 223 residues long: Uracil-DNA glycosylase (223 aa).

Residue Asp64 is the Proton acceptor of the active site.

It belongs to the uracil-DNA glycosylase (UDG) superfamily. UNG family.

The protein localises to the cytoplasm. It carries out the reaction Hydrolyzes single-stranded DNA or mismatched double-stranded DNA and polynucleotides, releasing free uracil.. In terms of biological role, excises uracil residues from the DNA which can arise as a result of misincorporation of dUMP residues by DNA polymerase or due to deamination of cytosine. The polypeptide is Uracil-DNA glycosylase (Desulfitobacterium hafniense (strain DSM 10664 / DCB-2)).